We begin with the raw amino-acid sequence, 298 residues long: 3-hydroxyisobutyrate dehydrogenase (298 aa).

NAD(+)-binding positions include T2–F30, L65–P66, and T96. K171 is an active-site residue. NAD(+) is bound at residue K246.

Belongs to the HIBADH-related family.

It catalyses the reaction 3-hydroxy-2-methylpropanoate + NAD(+) = 2-methyl-3-oxopropanoate + NADH + H(+). Its pathway is amino-acid degradation; L-valine degradation. The sequence is that of 3-hydroxyisobutyrate dehydrogenase from Pseudomonas aeruginosa (strain ATCC 15692 / DSM 22644 / CIP 104116 / JCM 14847 / LMG 12228 / 1C / PRS 101 / PAO1).